Consider the following 121-residue polypeptide: Small ribosomal subunit protein uS12c (121 aa).

This sequence belongs to the universal ribosomal protein uS12 family. In terms of assembly, part of the 30S ribosomal subunit.

It localises to the plastid. The protein resides in the apicoplast. In terms of biological role, with S4 and S5 plays an important role in translational accuracy. Located at the interface of the 30S and 50S subunits. The polypeptide is Small ribosomal subunit protein uS12c (rps12) (Toxoplasma gondii).